A 344-amino-acid polypeptide reads, in one-letter code: Lipase chaperone (344 aa).

The chain crosses the membrane as a helical span at residues 14 to 34 (AAIYGGVGLAAVAGVAMWSGA).

It belongs to the lipase chaperone family.

The protein resides in the cell inner membrane. Its function is as follows. May be involved in the folding of the extracellular lipase during its passage through the periplasm. The chain is Lipase chaperone from Burkholderia cenocepacia (strain ATCC BAA-245 / DSM 16553 / LMG 16656 / NCTC 13227 / J2315 / CF5610) (Burkholderia cepacia (strain J2315)).